The chain runs to 651 residues: Protein SCARECROW 1 (651 aa).

Disordered regions lie at residues 1 to 33 (MGSS…ITSL) and 188 to 277 (SDPA…KQRD). The span at 190-228 (PAPPPPPPPSHPALLPPDATAPPPPPTSVAALPPPPPPQ) shows a compositional bias: pro residues. Residues 253 to 280 (TAEETAAAAAAAKERKEEQRRKQRDEEG) adopt a coiled-coil conformation. Residues 254–263 (AEETAAAAAA) show a composition bias toward low complexity. Over residues 264–277 (AKERKEEQRRKQRD) the composition is skewed to basic and acidic residues. The GRAS domain occupies 274–644 (KQRDEEGLHL…LCLLTASAWR (371 aa)). The segment at 281-345 (LHLLTLLLQC…VSSCLGLYAP (65 aa)) is leucine repeat I (LRI). Positions 288-292 (LQCAE) match the LxCxE motif motif. A VHIID region spans residues 364–429 (FQVFNGISPF…GGPPRVRLTG (66 aa)). A VHIID motif is present at residues 395–399 (VHIID). Residues 439 to 471 (ATGKRLSDFADTLGLPFEFCPVADKAGNLDPEK) are leucine repeat II (LRII). The interval 480–567 (VAVHWLRHSL…QQLLSREIRN (88 aa)) is PFYRE. Residues 570–644 (AVGGPARTGD…LCLLTASAWR (75 aa)) are SAW.

The protein belongs to the GRAS family. As to quaternary structure, interacts with SHR1, but not with SHR2. As to expression, expressed in the initial daughter cell before its asymmetric division and remains expressed in the endodermal cell layer after the division.

Its subcellular location is the nucleus. Its function is as follows. Transcription factor required for quiescent center cells specification and maintenance of surrounding stem cells, and for the asymmetric cell division involved in radial pattern formation in roots. Essential for cell division but not differentiation of the ground tissue. Regulates the radial organization of the shoot axial organs. Restricts SHR movment and sequesters it into the nucleus of the endodermis. This chain is Protein SCARECROW 1 (SCR1), found in Oryza sativa subsp. japonica (Rice).